Here is a 632-residue protein sequence, read N- to C-terminus: DNA topoisomerase 4 subunit B (632 aa).

ATP-binding positions include Tyr-5, Asn-42, Asp-69, 110–116 (GLHGVGI), and Lys-334. The region spanning 412 to 525 (TELFLVEGDS…DGHVYVAMPP (114 aa)) is the Toprim domain. Glu-418, Asp-490, and Asp-492 together coordinate Mg(2+).

The protein belongs to the type II topoisomerase family. ParE type 1 subfamily. As to quaternary structure, heterotetramer composed of ParC and ParE. It depends on Mg(2+) as a cofactor. Requires Mn(2+) as cofactor. Ca(2+) is required as a cofactor.

It carries out the reaction ATP-dependent breakage, passage and rejoining of double-stranded DNA.. Its function is as follows. Topoisomerase IV is essential for chromosome segregation. It relaxes supercoiled DNA. Performs the decatenation events required during the replication of a circular DNA molecule. This chain is DNA topoisomerase 4 subunit B, found in Haemophilus influenzae (strain ATCC 51907 / DSM 11121 / KW20 / Rd).